A 171-amino-acid polypeptide reads, in one-letter code: Mitochondrial import inner membrane translocase subunit Tim17-A (171 aa).

Cysteines 9 and 78 form a disulfide. Helical transmembrane passes span 17 to 37 (CGGA…FKGF), 63 to 77 (GGSF…STID), and 113 to 133 (VGSA…GILL). Residues 144–171 (GPQFTEDHSQLPSSQLPSSPFGDYRQYQ) are disordered. The span at 153-163 (QLPSSQLPSSP) shows a compositional bias: low complexity.

Belongs to the Tim17/Tim22/Tim23 family. In terms of assembly, component of the TIM23 complex at least composed of TIMM23, TIMM17 (TIMM17A or TIMM17B) and TIMM50. The complex interacts with the TIMM44 component of the PAM complex and with DNAJC15. Degraded by YMEL1 downstream of the integrated stress response (ISR).

Its subcellular location is the mitochondrion inner membrane. Essential component of the TIM23 complex, a complex that mediates the translocation of transit peptide-containing proteins across the mitochondrial inner membrane. The polypeptide is Mitochondrial import inner membrane translocase subunit Tim17-A (Timm17a) (Mus musculus (Mouse)).